Here is a 415-residue protein sequence, read N- to C-terminus: Casein kinase I isoform delta (415 aa).

The Protein kinase domain maps to 9-277 (YRLGRKIGSG…YLRQLFRNLF (269 aa)). ATP is bound by residues 15 to 23 (IGSGSFGDI) and K38. D128 acts as the Proton acceptor in catalysis. The tract at residues 278-364 (HRQGFSYDYV…TSPRPVSGME (87 aa)) is centrosomal localization signal (CLS). Residues 301–315 (ADDAERERRDREERL) are compositionally biased toward basic and acidic residues. Positions 301 to 415 (ADDAERERRD…SSGLQSVVHR (115 aa)) are disordered. Residues 317–342 (HSRNPATRGLPSTASGRLRGTQEVAP) are autoinhibitory. A phosphoserine mark is found at S328 and S331. A compositionally biased stretch (polar residues) spans 347 to 358 (TPTSHTANTSPR). S370 carries the phosphoserine modification. Residue R375 is modified to Omega-N-methylarginine. The segment covering 380–400 (NISSSDLTGRQDTSRMSTSQI) has biased composition (polar residues). 5 positions are modified to phosphoserine: S382, S383, S384, S407, and S411.

This sequence belongs to the protein kinase superfamily. CK1 Ser/Thr protein kinase family. Casein kinase I subfamily. In terms of assembly, monomer. Component of the circadian core oscillator, which includes the CRY proteins, CLOCK, or NPAS2, ARTNL/BMAL1 or ARTNL2/BMAL2, CSNK1D and/or CSNK1E, TIMELESS and the PER proteins. Interacts with DNMT1 and MAP1A. Interacts directly with PER1 and PER2 which may lead to their degradation. Interacts with MAPT/TAU, SNAPIN, DBNDD2, AIB1/NCOA3 and ESR1. Interacts with AKAP9/AKAP450; this interaction promotes centrosomal subcellular location. Binds to tubulins in mitotic cells upon DNA damage. Interacts with GJA1. Interacts with DDX3X; this interaction enhances CSNK1D kinase activity in vitro, but it is unclear whether this interaction is physiologically relevant. Interacts with FAM83A, FAM83B, FAM83E and FAM83H (via DUF1669). Post-translationally, autophosphorylated on serine and threonine residues; this autophosphorylation represses activity. Reactivated by phosphatase-mediated dephosphorylation. May be dephosphorylated by PP1.

Its subcellular location is the cytoplasm. It localises to the nucleus. It is found in the cytoskeleton. The protein resides in the microtubule organizing center. The protein localises to the centrosome. Its subcellular location is the perinuclear region. It localises to the cell membrane. It is found in the spindle. The protein resides in the golgi apparatus. It catalyses the reaction L-seryl-[protein] + ATP = O-phospho-L-seryl-[protein] + ADP + H(+). The catalysed reaction is L-threonyl-[protein] + ATP = O-phospho-L-threonyl-[protein] + ADP + H(+). It carries out the reaction L-seryl-[tau protein] + ATP = O-phospho-L-seryl-[tau protein] + ADP + H(+). The enzyme catalyses L-threonyl-[tau protein] + ATP = O-phospho-L-threonyl-[tau protein] + ADP + H(+). Its activity is regulated as follows. Exhibits substrate-dependent heparin activation. Drug-mediated inhibition leads to a delay of the oscillations with the magnitude of this effect dependent upon the timing of drug administration. Inhibited by phosphorylation. In terms of biological role, essential serine/threonine-protein kinase that regulates diverse cellular growth and survival processes including Wnt signaling, DNA repair and circadian rhythms. It can phosphorylate a large number of proteins. Casein kinases are operationally defined by their preferential utilization of acidic proteins such as caseins as substrates. Phosphorylates connexin-43/GJA1, MAP1A, SNAPIN, MAPT/TAU, TOP2A, DCK, HIF1A, EIF6, p53/TP53, DVL2, DVL3, ESR1, AIB1/NCOA3, DNMT1, PKD2, YAP1, PER1 and PER2. Central component of the circadian clock. In balance with PP1, determines the circadian period length through the regulation of the speed and rhythmicity of PER1 and PER2 phosphorylation. Controls PER1 and PER2 nuclear transport and degradation. YAP1 phosphorylation promotes its SCF(beta-TRCP) E3 ubiquitin ligase-mediated ubiquitination and subsequent degradation. DNMT1 phosphorylation reduces its DNA-binding activity. Phosphorylation of ESR1 and AIB1/NCOA3 stimulates their activity and coactivation. Phosphorylation of DVL2 and DVL3 regulates WNT3A signaling pathway that controls neurite outgrowth. Phosphorylates NEDD9/HEF1. EIF6 phosphorylation promotes its nuclear export. Triggers down-regulation of dopamine receptors in the forebrain. Activates DCK in vitro by phosphorylation. TOP2A phosphorylation favors DNA cleavable complex formation. May regulate the formation of the mitotic spindle apparatus in extravillous trophoblast. Modulates connexin-43/GJA1 gap junction assembly by phosphorylation. Probably involved in lymphocyte physiology. Regulates fast synaptic transmission mediated by glutamate. The chain is Casein kinase I isoform delta (CSNK1D) from Pongo abelii (Sumatran orangutan).